Here is a 448-residue protein sequence, read N- to C-terminus: Exodeoxyribonuclease 7 large subunit (448 aa).

The protein belongs to the XseA family. Heterooligomer composed of large and small subunits.

Its subcellular location is the cytoplasm. The enzyme catalyses Exonucleolytic cleavage in either 5'- to 3'- or 3'- to 5'-direction to yield nucleoside 5'-phosphates.. Functionally, bidirectionally degrades single-stranded DNA into large acid-insoluble oligonucleotides, which are then degraded further into small acid-soluble oligonucleotides. This Shewanella baltica (strain OS223) protein is Exodeoxyribonuclease 7 large subunit.